Reading from the N-terminus, the 495-residue chain is Putative FAD-containing monooxygenase MymA (495 aa).

FAD contacts are provided by residues serine 15, glutamate 36, tryptophan 45, 56–57 (DS), and valine 104.

The protein belongs to the FAD-binding monooxygenase family. FAD serves as cofactor.

Functionally, required for maintaining the appropriate mycolic acid composition and permeability of the envelope on its exposure to acidic pH. This is Putative FAD-containing monooxygenase MymA (mymA) from Mycobacterium tuberculosis (strain CDC 1551 / Oshkosh).